Reading from the N-terminus, the 342-residue chain is Ribosomal RNA small subunit methyltransferase C (342 aa).

It belongs to the methyltransferase superfamily. RsmC family. In terms of assembly, monomer.

It is found in the cytoplasm. It catalyses the reaction guanosine(1207) in 16S rRNA + S-adenosyl-L-methionine = N(2)-methylguanosine(1207) in 16S rRNA + S-adenosyl-L-homocysteine + H(+). Its function is as follows. Specifically methylates the guanine in position 1207 of 16S rRNA in the 30S particle. The sequence is that of Ribosomal RNA small subunit methyltransferase C from Salmonella arizonae (strain ATCC BAA-731 / CDC346-86 / RSK2980).